Consider the following 114-residue polypeptide: Non-specific lipid-transfer protein 1 (114 aa).

The signal sequence occupies residues 1–23 (MEMVSKIACFVLLCMVVVAPHAE). 4 disulfides stabilise this stretch: cysteine 27–cysteine 73, cysteine 37–cysteine 50, cysteine 51–cysteine 96, and cysteine 71–cysteine 110.

Belongs to the plant LTP family.

Functionally, plant non-specific lipid-transfer proteins transfer phospholipids as well as galactolipids across membranes. May play a role in wax or cutin deposition in the cell walls of expanding epidermal cells and certain secretory tissues. The protein is Non-specific lipid-transfer protein 1 (TSW12) of Solanum lycopersicum (Tomato).